Here is a 332-residue protein sequence, read N- to C-terminus: Ketol-acid reductoisomerase (NADP(+)) 2 (332 aa).

The KARI N-terminal Rossmann domain maps to 2 to 182 (AELFYDADAD…GGTRAGVIRT (181 aa)). Residues 25-28 (YGSQ), serine 51, serine 53, and 83-86 (DPIQ) contribute to the NADP(+) site. Residue histidine 108 is part of the active site. Residue glycine 134 participates in NADP(+) binding. Residues 183–328 (TFTEETETDL…KELRKLMSWV (146 aa)) enclose the KARI C-terminal knotted domain. Residues aspartate 191, glutamate 195, glutamate 227, and glutamate 231 each contribute to the Mg(2+) site. Residue serine 252 coordinates substrate.

Belongs to the ketol-acid reductoisomerase family. Requires Mg(2+) as cofactor.

The catalysed reaction is (2R)-2,3-dihydroxy-3-methylbutanoate + NADP(+) = (2S)-2-acetolactate + NADPH + H(+). The enzyme catalyses (2R,3R)-2,3-dihydroxy-3-methylpentanoate + NADP(+) = (S)-2-ethyl-2-hydroxy-3-oxobutanoate + NADPH + H(+). It functions in the pathway amino-acid biosynthesis; L-isoleucine biosynthesis; L-isoleucine from 2-oxobutanoate: step 2/4. Its pathway is amino-acid biosynthesis; L-valine biosynthesis; L-valine from pyruvate: step 2/4. Involved in the biosynthesis of branched-chain amino acids (BCAA). Catalyzes an alkyl-migration followed by a ketol-acid reduction of (S)-2-acetolactate (S2AL) to yield (R)-2,3-dihydroxy-isovalerate. In the isomerase reaction, S2AL is rearranged via a Mg-dependent methyl migration to produce 3-hydroxy-3-methyl-2-ketobutyrate (HMKB). In the reductase reaction, this 2-ketoacid undergoes a metal-dependent reduction by NADPH to yield (R)-2,3-dihydroxy-isovalerate. The polypeptide is Ketol-acid reductoisomerase (NADP(+)) 2 (Streptomyces coelicolor (strain ATCC BAA-471 / A3(2) / M145)).